Consider the following 206-residue polypeptide: Protein-methionine-sulfoxide reductase heme-binding subunit MsrQ (206 aa).

6 helical membrane-spanning segments follow: residues I7 to G27, F43 to Y63, L77 to L97, G112 to W132, W142 to V162, and S172 to I192.

Belongs to the MsrQ family. As to quaternary structure, heterodimer of a catalytic subunit (MsrP) and a heme-binding subunit (MsrQ). It depends on FMN as a cofactor. The cofactor is heme b.

The protein localises to the cell inner membrane. Its function is as follows. Part of the MsrPQ system that repairs oxidized periplasmic proteins containing methionine sulfoxide residues (Met-O), using respiratory chain electrons. Thus protects these proteins from oxidative-stress damage caused by reactive species of oxygen and chlorine generated by the host defense mechanisms. MsrPQ is essential for the maintenance of envelope integrity under bleach stress, rescuing a wide series of structurally unrelated periplasmic proteins from methionine oxidation. MsrQ provides electrons for reduction to the reductase catalytic subunit MsrP, using the quinone pool of the respiratory chain. In Pasteurella multocida (strain Pm70), this protein is Protein-methionine-sulfoxide reductase heme-binding subunit MsrQ.